The sequence spans 517 residues: Protein disulfide-isomerase A5 (517 aa).

A signal peptide spans 1-21 (MARAWGLLLAIGVILPTWLSS). Cystine bridges form between Cys83-Cys92, Cys180-Cys183, Cys303-Cys306, and Cys424-Cys427. 3 consecutive Thioredoxin domains span residues 132-259 (FLKD…NPQP), 268-382 (PWAD…NPEA), and 376-504 (WMQN…TLRE). The short motif at 514–517 (REDL) is the Prevents secretion from ER element.

This sequence belongs to the protein disulfide isomerase family.

The protein localises to the endoplasmic reticulum lumen. The catalysed reaction is Catalyzes the rearrangement of -S-S- bonds in proteins.. This Rattus norvegicus (Rat) protein is Protein disulfide-isomerase A5 (Pdia5).